The following is a 1143-amino-acid chain: Condensin-2 complex subunit G2 (1143 aa).

S30 is subject to Phosphoserine. Residues 460 to 498 (LLPALRYSLHDNSEKVRVAFVDMLLKIKAVRAAKFWKIC) form an HEAT repeat. Phosphothreonine is present on residues T805 and T1119.

In terms of assembly, component of the condensin-2 complex, which contains the SMC2 and SMC4 heterodimer, and 3 non SMC subunits that probably regulate the complex: NCAPH2, NCAPD3 and NCAPG2.

It is found in the nucleus. Its function is as follows. Regulatory subunit of the condensin-2 complex, a complex which establishes mitotic chromosome architecture and is involved in physical rigidity of the chromatid axis. The polypeptide is Condensin-2 complex subunit G2 (NCAPG2) (Homo sapiens (Human)).